Consider the following 612-residue polypeptide: MSKVIGIDLGTTNSCVAVMEGGEAVVIPNAEGGRTTPSVVAFTKEGERIVGQVAKRQAITNPDRTVISIKRHMGTNYKVKIDNKEYTPQEISAMILQKLKADAEAYLGEKVTQAVITVPAYFTDSQRQATKDAGRIAGLEVLRIINEPTAASLAYGLDKGEDQTILVYDLGGGTFDVSILELGDGVFEVKATSGNNRLGGDDFDQRIMDYLVDICRREHGVDLTQDKMAMQRLKEAAEKAKIELSGMTSTNINLPFISATPNGPVHLDVNLTRAKFEELIADLVEKTVGPTRQALADAGLEPKDIDKVLLVGGSTRVPLVQETVRKILGQEPHKGINPDECVALGAAIQGGVLAGEVKDVLLLDVTPLSLGIETLGGVFTKLIERNTTIPTSKSQIFSTAADNQTTVEIHVLQGERAMAADNKTLGRFQLTGIPPAPRGVPQIEVKFDIDANGIVHVSAKDLGTGKQQAITITSSSGLSEEEIQRMVKEAEASAEADRRRKEEIETRNQADSLIYQAERTLKEFKDKADQNDVDRIEKAKKELQEVLDSKNNDKIKEKMEALSQALYTLTTKVYQQAGAQAGAQGQGAAGGQKQDGNVYDADYKVVDDDKKE.

T174 is modified (phosphothreonine; by autocatalysis). Positions 578–612 are disordered; that stretch reads GAQAGAQGQGAAGGQKQDGNVYDADYKVVDDDKKE. Residues 601–612 show a composition bias toward basic and acidic residues; it reads ADYKVVDDDKKE.

It belongs to the heat shock protein 70 family.

Acts as a chaperone. In Moorella thermoacetica (strain ATCC 39073 / JCM 9320), this protein is Chaperone protein DnaK.